The following is a 499-amino-acid chain: Probable cytochrome P450 cyp-35D1 (499 aa).

Cysteine 444 contacts heme.

This sequence belongs to the cytochrome P450 family. It depends on heme as a cofactor. As to expression, expressed in hypodermis, intestine and vulva upon thiabendazole (TBZ) exposure.

Functionally, cytochromes P450 are a group of heme-thiolate monooxygenases. They oxidize a variety of structurally unrelated compounds, including steroids, fatty acids, and xenobiotics. Involved in the oxidative metabolism of thiabendazole (TBZ). Catalyzes the conversion of TBZ to its hydroxylated form. The chain is Probable cytochrome P450 cyp-35D1 from Caenorhabditis elegans.